A 217-amino-acid chain; its full sequence is Guanylate kinase (217 aa).

A compositionally biased stretch (low complexity) spans 1–10 (MAVSSTTLSS). The disordered stretch occupies residues 1–30 (MAVSSTTLSSPTPPECLQQQEAPRPPATRG). The 179-residue stretch at 30-208 (GRLVVLTGPS…ALQELEALLY (179 aa)) folds into the Guanylate kinase-like domain. Residue 37–44 (GPSGVGKG) participates in ATP binding.

This sequence belongs to the guanylate kinase family.

The protein localises to the cytoplasm. It catalyses the reaction GMP + ATP = GDP + ADP. It carries out the reaction dZMP + ATP = dZDP + ADP. The protein operates within purine metabolism. Essential for recycling GMP and indirectly, cGMP. Functionally, (Microbial infection) Catalyzes the phosphorylation of dZMP to dZDP, when the bacterium is infected by a phage that produces the substrate for the synthesis of dZTP (2- amino-2'-deoxyadenosine 5'-triphosphate), which is then used by the phage as a DNA polymerase substrate. In Synechococcus sp. (strain JA-3-3Ab) (Cyanobacteria bacterium Yellowstone A-Prime), this protein is Guanylate kinase.